A 946-amino-acid polypeptide reads, in one-letter code: Bifunctional glutamine synthetase adenylyltransferase/adenylyl-removing enzyme (946 aa).

The adenylyl removase stretch occupies residues 1–440; it reads MKPLSSPLQQ…VFNELIGDDE (440 aa). An adenylyl transferase region spans residues 449–946; the sequence is SEQWRELWQD…ASWQKWLVEE (498 aa).

It belongs to the GlnE family. Requires Mg(2+) as cofactor.

The enzyme catalyses [glutamine synthetase]-O(4)-(5'-adenylyl)-L-tyrosine + phosphate = [glutamine synthetase]-L-tyrosine + ADP. It carries out the reaction [glutamine synthetase]-L-tyrosine + ATP = [glutamine synthetase]-O(4)-(5'-adenylyl)-L-tyrosine + diphosphate. Its function is as follows. Involved in the regulation of glutamine synthetase GlnA, a key enzyme in the process to assimilate ammonia. When cellular nitrogen levels are high, the C-terminal adenylyl transferase (AT) inactivates GlnA by covalent transfer of an adenylyl group from ATP to specific tyrosine residue of GlnA, thus reducing its activity. Conversely, when nitrogen levels are low, the N-terminal adenylyl removase (AR) activates GlnA by removing the adenylyl group by phosphorolysis, increasing its activity. The regulatory region of GlnE binds the signal transduction protein PII (GlnB) which indicates the nitrogen status of the cell. This is Bifunctional glutamine synthetase adenylyltransferase/adenylyl-removing enzyme from Escherichia coli O9:H4 (strain HS).